An 843-amino-acid chain; its full sequence is Junction-mediating and -regulatory protein (843 aa).

The segment at 49–91 (RTAQRQRSADKAGGRSPARQQQRDSPAQSPARKAREEPEEGEE) is disordered. The span at 66–76 (ARQQQRDSPAQ) shows a compositional bias: polar residues. Coiled-coil stretches lie at residues 190–225 (SELR…VDLL), 359–385 (RAKE…GTEA), and 416–487 (LLLT…AKKA). 3 disordered regions span residues 518–537 (QLKQ…WVSQ), 558–632 (VLKS…ITSE), and 652–688 (STLQ…TDTL). Over residues 562-574 (TRLRFSHERRRST) the composition is skewed to basic residues. Polar residues-rich tracts occupy residues 582–596 (DAPQ…TQGL) and 613–630 (PETT…NAIT). Positions 661–680 (ASPPPPPPPLPPPPPPPLPP) are enriched in pro residues. The WH2 domain maps to 776–793 (ESNNILAQIRKGVKLKKV). The segment at 821–843 (RIKEASPESEDEEESLPCTDWEN) is disordered. Positions 827–843 (PESEDEEESLPCTDWEN) are enriched in acidic residues.

It belongs to the JMY family.

It is found in the nucleus. The protein resides in the cytoplasmic vesicle. Its subcellular location is the cytoplasm. The protein localises to the cytoskeleton. It localises to the endomembrane system. It is found in the autophagosome membrane. In terms of biological role, acts both as a nuclear p53/TP53-cofactor and a cytoplasmic regulator of actin dynamics depending on conditions. In nucleus, acts as a cofactor that increases p53/TP53 response. Increases p53/TP53-dependent transcription and apoptosis, suggesting an important role in p53/TP53 stress response such as DNA damage. In cytoplasm, acts as a nucleation-promoting factor for both branched and unbranched actin filaments. Activates the Arp2/3 complex to induce branched actin filament networks. Also catalyzes actin polymerization in the absence of Arp2/3, creating unbranched filaments. Contributes to cell motility by controlling actin dynamics. The chain is Junction-mediating and -regulatory protein (jmy) from Xenopus tropicalis (Western clawed frog).